A 76-amino-acid chain; its full sequence is Esculentin-2CG1 (76 aa).

Positions 1–22 (MFTMKKSMLLLFFLGTISLSLC) are cleaved as a signal peptide. A propeptide spans 23–37 (EEERSADEDDGEEEV) (removed in mature form). A disulfide bridge connects residues Cys-70 and Cys-76.

Expressed by the skin glands.

It is found in the secreted. Antimicrobial peptide active against a variety of Gram-positive and some Gram-negative bacterial strains. Has antifungal activity against a slime mold isolate. Has hemolytic activity against human erythrocytes. This is Esculentin-2CG1 from Amolops chunganensis (Chungan torrent frog).